Consider the following 352-residue polypeptide: DNA polymerase IV (352 aa).

The 182-residue stretch at 4 to 185 (IIHVDMDCFF…LPLSKIPGVG (182 aa)) folds into the UmuC domain. Mg(2+)-binding residues include D8 and D103. E104 is an active-site residue.

This sequence belongs to the DNA polymerase type-Y family. In terms of assembly, monomer. Mg(2+) is required as a cofactor.

The protein localises to the cytoplasm. It carries out the reaction DNA(n) + a 2'-deoxyribonucleoside 5'-triphosphate = DNA(n+1) + diphosphate. Poorly processive, error-prone DNA polymerase involved in untargeted mutagenesis. Copies undamaged DNA at stalled replication forks, which arise in vivo from mismatched or misaligned primer ends. These misaligned primers can be extended by PolIV. Exhibits no 3'-5' exonuclease (proofreading) activity. May be involved in translesional synthesis, in conjunction with the beta clamp from PolIII. The protein is DNA polymerase IV of Yersinia pestis bv. Antiqua (strain Antiqua).